A 408-amino-acid polypeptide reads, in one-letter code: Elongation factor Tu (408 aa).

The tr-type G domain maps to 10 to 219 (KTHVNVGTIG…ALDTYIPDPV (210 aa)). GTP-binding positions include 19–26 (GHVDHGKT), 88–92 (DCPGH), and 143–146 (NKCD). Position 26 (Thr26) interacts with Mg(2+).

It belongs to the TRAFAC class translation factor GTPase superfamily. Classic translation factor GTPase family. EF-Tu/EF-1A subfamily. Monomer.

Its subcellular location is the cytoplasm. It catalyses the reaction GTP + H2O = GDP + phosphate + H(+). In terms of biological role, GTP hydrolase that promotes the GTP-dependent binding of aminoacyl-tRNA to the A-site of ribosomes during protein biosynthesis. The protein is Elongation factor Tu of Brachyspira hyodysenteriae (strain ATCC 49526 / WA1).